Consider the following 745-residue polypeptide: Putative cryptochrome DASH, mitochondrial (745 aa).

The transit peptide at 1 to 22 (MAPSKVVIYAMRRELRLSDNPI) directs the protein to the mitochondrion. The Photolyase/cryptochrome alpha/beta domain occupies 23 to 166 (FHHLSNPESK…DFKLWDDEKY (144 aa)). 2 disordered regions span residues 563–688 (KFNL…GGGG) and 702–745 (GGYR…QTDA). Residues 571–584 (SKVKKRPFFRKRGT) show a composition bias toward basic residues. Low complexity predominate over residues 591–603 (GSAESPGSSDSHS). Gly residues predominate over residues 604–616 (GSGGSPDGSGGGN). Over residues 632-648 (QQTHQGSGRSQSSSNHG) the composition is skewed to low complexity. Composition is skewed to gly residues over residues 672–688 (RGGG…GGGG) and 702–718 (GGYR…GGFR). The segment covering 735–745 (QQVASQFQTDA) has biased composition (polar residues).

It belongs to the DNA photolyase class-1 family. Requires FAD as cofactor. (6R)-5,10-methylene-5,6,7,8-tetrahydrofolate is required as a cofactor.

The protein localises to the mitochondrion. Its function is as follows. May have a photoreceptor function. This chain is Putative cryptochrome DASH, mitochondrial (cry), found in Neurospora crassa (strain ATCC 24698 / 74-OR23-1A / CBS 708.71 / DSM 1257 / FGSC 987).